Consider the following 426-residue polypeptide: Enolase (426 aa).

Gln-163 is a binding site for (2R)-2-phosphoglycerate. Glu-205 serves as the catalytic Proton donor. Asp-242, Glu-286, and Asp-313 together coordinate Mg(2+). (2R)-2-phosphoglycerate contacts are provided by Lys-338, Arg-367, Ser-368, and Lys-389. Lys-338 serves as the catalytic Proton acceptor.

It belongs to the enolase family. The cofactor is Mg(2+).

It is found in the cytoplasm. The protein resides in the secreted. The protein localises to the cell surface. It carries out the reaction (2R)-2-phosphoglycerate = phosphoenolpyruvate + H2O. It functions in the pathway carbohydrate degradation; glycolysis; pyruvate from D-glyceraldehyde 3-phosphate: step 4/5. Catalyzes the reversible conversion of 2-phosphoglycerate (2-PG) into phosphoenolpyruvate (PEP). It is essential for the degradation of carbohydrates via glycolysis. The polypeptide is Enolase (Helicobacter pylori (strain G27)).